We begin with the raw amino-acid sequence, 187 residues long: dTTP/UTP pyrophosphatase (187 aa).

The active-site Proton acceptor is the Asp-64.

This sequence belongs to the Maf family. YhdE subfamily. A divalent metal cation is required as a cofactor.

The protein localises to the cytoplasm. It carries out the reaction dTTP + H2O = dTMP + diphosphate + H(+). The catalysed reaction is UTP + H2O = UMP + diphosphate + H(+). In terms of biological role, nucleoside triphosphate pyrophosphatase that hydrolyzes dTTP and UTP. May have a dual role in cell division arrest and in preventing the incorporation of modified nucleotides into cellular nucleic acids. This chain is dTTP/UTP pyrophosphatase, found in Leptospira interrogans serogroup Icterohaemorrhagiae serovar Lai (strain 56601).